The chain runs to 263 residues: Phosphatidylglycerol--prolipoprotein diacylglyceryl transferase (263 aa).

Helical transmembrane passes span 15 to 35 (ISIH…VYLA), 52 to 72 (FILL…VIFQ), 83 to 103 (IFAI…GAAV), and 112 to 132 (AIAV…AQSI). Residue Arg134 participates in a 1,2-diacyl-sn-glycero-3-phospho-(1'-sn-glycerol) binding. 3 consecutive transmembrane segments (helical) span residues 170 to 190 (VPTF…ILGL), 200 to 220 (GDVT…IEGM), and 230 to 250 (LRVS…LLYF).

It belongs to the Lgt family.

It localises to the cell membrane. The enzyme catalyses L-cysteinyl-[prolipoprotein] + a 1,2-diacyl-sn-glycero-3-phospho-(1'-sn-glycerol) = an S-1,2-diacyl-sn-glyceryl-L-cysteinyl-[prolipoprotein] + sn-glycerol 1-phosphate + H(+). It participates in protein modification; lipoprotein biosynthesis (diacylglyceryl transfer). Its function is as follows. Catalyzes the transfer of the diacylglyceryl group from phosphatidylglycerol to the sulfhydryl group of the N-terminal cysteine of a prolipoprotein, the first step in the formation of mature lipoproteins. The sequence is that of Phosphatidylglycerol--prolipoprotein diacylglyceryl transferase from Streptococcus thermophilus (strain ATCC BAA-250 / LMG 18311).